The sequence spans 251 residues: Prothoracicostatic peptides (251 aa).

The disordered stretch occupies residues 1–22 (MRKSARGQVCTEAGAGASGDWQ). A propeptide spanning residues 1 to 77 (MRKSARGQVC…GWQDLNSAWG (77 aa)) is cleaved from the precursor. Tryptophan amide is present on tryptophan 89. Residues 93-138 (GWNDMSSAWGKRGWNDMSSAWGKRGWNDMSSAWGKRGWNDMSSAWG) constitute a propeptide that is removed on maturation. Tryptophan 152 carries the tryptophan amide modification. A propeptide spanning residues 156-187 (AAEPDYEEIDAAIEQLIPIQQLSDNERMEVPE) is cleaved from the precursor. Tryptophan amide is present on residues tryptophan 198 and tryptophan 228. The disordered stretch occupies residues 227–251 (MWGKRSAPDADAVDDDHESSARDEA).

In terms of tissue distribution, prothoracicostatic peptide 5: Expressed in antennal lobe (AL), corpora cardiaca (CC), corpora allata (CA) and gnathal ganglion (GNG) (at protein level). Expression in AL detected in all animals, in CC, CA and GNG in most (at protein level). Prothoracicostatic peptide 6: Expressed in antennal lobe (AL), corpora cardiaca (CC), corpora allata (CA) and gnathal ganglion (GNG) (at protein level). Expression in AL detected in all animals, expression in GNG in most animals, in CA and CC detected in some animals (at protein level). Prothoracicostatic peptide 7: Expressed in antennal lobe (AL), corpora cardiaca (CC), corpora allata (CA) and gnathal ganglion (GNG) (at protein level). Expression in AL, CA and CC detected in most animals, expression in GNG in some animals (at protein level). Prothoracicostatic peptide precursor-related peptide 2: Expressed in antennal lobe (AL), corpora cardiaca (CC) and corpora allata (CA) with expression detected in few animals (at protein level). Not expressed in gnathal ganglion (GNG) (at protein level). Prothoracicostatic peptide 8: Expressed in antennal lobe (AL), corpora cardiaca (CC), corpora allata (CA) and gnathal ganglion (GNG) (at protein level). Expression in AL detected in all animals, expression in GNG in most animals, in CA and CC detected in some animals (at protein level). Prothoracicostatic peptide precursor-related peptide 3: Expressed in antennal lobe (AL) in few animals (at protein level). Not expressed in corpora cardiaca (CC), corpora allata (CA) and gnathal ganglion (GNG) (at protein level).

The protein localises to the secreted. The protein is Prothoracicostatic peptides of Agrotis ipsilon (Black cutworm moth).